Consider the following 172-residue polypeptide: 3-hydroxydecanoyl-[acyl-carrier-protein] dehydratase (172 aa).

His71 is a catalytic residue.

Belongs to the thioester dehydratase family. FabA subfamily. As to quaternary structure, homodimer.

The protein localises to the cytoplasm. The catalysed reaction is a (3R)-hydroxyacyl-[ACP] = a (2E)-enoyl-[ACP] + H2O. It carries out the reaction (3R)-hydroxydecanoyl-[ACP] = (2E)-decenoyl-[ACP] + H2O. It catalyses the reaction (2E)-decenoyl-[ACP] = (3Z)-decenoyl-[ACP]. Its pathway is lipid metabolism; fatty acid biosynthesis. Its function is as follows. Necessary for the introduction of cis unsaturation into fatty acids. Catalyzes the dehydration of (3R)-3-hydroxydecanoyl-ACP to E-(2)-decenoyl-ACP and then its isomerization to Z-(3)-decenoyl-ACP. Can catalyze the dehydratase reaction for beta-hydroxyacyl-ACPs with saturated chain lengths up to 16:0, being most active on intermediate chain length. This Klebsiella pneumoniae (strain 342) protein is 3-hydroxydecanoyl-[acyl-carrier-protein] dehydratase.